Reading from the N-terminus, the 304-residue chain is Oxygen-dependent coproporphyrinogen-III oxidase (304 aa).

Substrate is bound at residue S94. Positions 98 and 108 each coordinate a divalent metal cation. The active-site Proton donor is H108. 110 to 112 (NVR) is a substrate binding site. A divalent metal cation is bound by residues H147 and H177. The segment at 242–277 (YVEFNLVYDRGTLFGLQTGGRTESILMSMPPLVRWE) is important for dimerization. 260 to 262 (GGR) serves as a coordination point for substrate.

This sequence belongs to the aerobic coproporphyrinogen-III oxidase family. In terms of assembly, homodimer. A divalent metal cation serves as cofactor.

The protein resides in the cytoplasm. It catalyses the reaction coproporphyrinogen III + O2 + 2 H(+) = protoporphyrinogen IX + 2 CO2 + 2 H2O. It participates in porphyrin-containing compound metabolism; protoporphyrin-IX biosynthesis; protoporphyrinogen-IX from coproporphyrinogen-III (O2 route): step 1/1. Its function is as follows. Involved in the heme biosynthesis. Catalyzes the aerobic oxidative decarboxylation of propionate groups of rings A and B of coproporphyrinogen-III to yield the vinyl groups in protoporphyrinogen-IX. The chain is Oxygen-dependent coproporphyrinogen-III oxidase from Shewanella halifaxensis (strain HAW-EB4).